The primary structure comprises 641 residues: Chaperone protein DnaK (641 aa).

Thr201 carries the post-translational modification Phosphothreonine; by autocatalysis. A compositionally biased stretch (low complexity) spans 604 to 622; the sequence is ASAEQGGAAPGADAGNAGK. The segment at 604 to 625 is disordered; that stretch reads ASAEQGGAAPGADAGNAGKAQD.

This sequence belongs to the heat shock protein 70 family.

Functionally, acts as a chaperone. This chain is Chaperone protein DnaK, found in Stenotrophomonas maltophilia (strain R551-3).